We begin with the raw amino-acid sequence, 164 residues long: Aspartic proteinase nepenthesin-1 (164 aa).

One can recognise a Peptidase A1 domain in the interval 17–164 (YLMXLSIGTP…VSFVSAQCGA (148 aa)). The active site involves aspartate 35. N-linked (GlcNAc...) asparagine glycosylation occurs at asparagine 93.

Belongs to the peptidase A1 family. As to expression, parenchymal cells surrounding the secretory glands.

It is found in the secreted. The enzyme catalyses Similar to pepsin, but also cleaves on either side of Asp and at Lys-|-Arg.. With respect to regulation, inhibited by pepstatin and by diazoacetyl-D,L-norleucine methyl ester (DAN) in the presence of Cu(2+) ions. In terms of biological role, extracellular proteinase found in the pitcher fluid of carnivorous plants. Digest prey for nitrogen uptake. This chain is Aspartic proteinase nepenthesin-1, found in Nepenthes distillatoria (Pitcher plant).